A 56-amino-acid polypeptide reads, in one-letter code: uncharacterized protein (56 aa).

This is an uncharacterized protein from Homo sapiens (Human).